A 188-amino-acid polypeptide reads, in one-letter code: Movement protein (188 aa).

The protein belongs to the tombusvirus/aureusvirus movement protein p22 family. As to quaternary structure, interacts with host protein HFI22. Post-translationally, phosphorylated.

It is found in the host membrane. Transports viral genome to neighboring plant cells directly through plasmosdesmata, without any budding. The movement protein allows efficient cell to cell propagation, by bypassing the host cell wall barrier. The polypeptide is Movement protein (Capsicum annuum (Capsicum pepper)).